Consider the following 512-residue polypeptide: ATP synthase subunit alpha (512 aa).

169–176 (GDRQTGKT) is an ATP binding site.

The protein belongs to the ATPase alpha/beta chains family. As to quaternary structure, F-type ATPases have 2 components, CF(1) - the catalytic core - and CF(0) - the membrane proton channel. CF(1) has five subunits: alpha(3), beta(3), gamma(1), delta(1), epsilon(1). CF(0) has three main subunits: a(1), b(2) and c(9-12). The alpha and beta chains form an alternating ring which encloses part of the gamma chain. CF(1) is attached to CF(0) by a central stalk formed by the gamma and epsilon chains, while a peripheral stalk is formed by the delta and b chains.

Its subcellular location is the cell inner membrane. It catalyses the reaction ATP + H2O + 4 H(+)(in) = ADP + phosphate + 5 H(+)(out). Functionally, produces ATP from ADP in the presence of a proton gradient across the membrane. The alpha chain is a regulatory subunit. This chain is ATP synthase subunit alpha, found in Rickettsia canadensis (strain McKiel).